Here is a 106-residue protein sequence, read N- to C-terminus: MGFFKKIKKAVKKVVKEVGKPIEKAGKEVGKAVGGALGAGKQEIIQQEAPAPVVAAPPPAQVVDVPEQDKAEGEDEAQTESARKKARAGGKKALSVARSSGGGINI.

Residues 48–106 are disordered; that stretch reads EAPAPVVAAPPPAQVVDVPEQDKAEGEDEAQTESARKKARAGGKKALSVARSSGGGINI.

It belongs to the T7likevirus protein 7.3 family.

It localises to the virion. Its function is as follows. Plays an essential role most probably in virion tail assembly. May form a scaffold around which gp11 and gp12 polymerize. Gets ejected from the infecting particle into the bacterial cell. This chain is Protein 7.3 (7.3), found in Enterobacteria phage T3 (Bacteriophage T3).